Reading from the N-terminus, the 380-residue chain is uncharacterized protein (380 aa).

The 4Fe-4S ferredoxin-type domain maps to Leu287–Gly318.

This is an uncharacterized protein from Methanocaldococcus jannaschii (strain ATCC 43067 / DSM 2661 / JAL-1 / JCM 10045 / NBRC 100440) (Methanococcus jannaschii).